The chain runs to 111 residues: Putative membrane protein insertion efficiency factor (111 aa).

It belongs to the UPF0161 family.

The protein resides in the cell inner membrane. Functionally, could be involved in insertion of integral membrane proteins into the membrane. The polypeptide is Putative membrane protein insertion efficiency factor (Methylobacterium nodulans (strain LMG 21967 / CNCM I-2342 / ORS 2060)).